The following is a 71-amino-acid chain: UPF0346 protein SPT_1257 (71 aa).

It belongs to the UPF0346 family.

The protein is UPF0346 protein SPT_1257 of Streptococcus pneumoniae (strain Taiwan19F-14).